The following is an 851-amino-acid chain: Alanine--tRNA ligase (851 aa).

4 residues coordinate Zn(2+): His554, His558, Cys656, and His660.

It belongs to the class-II aminoacyl-tRNA synthetase family. The cofactor is Zn(2+).

It is found in the cytoplasm. It carries out the reaction tRNA(Ala) + L-alanine + ATP = L-alanyl-tRNA(Ala) + AMP + diphosphate. Catalyzes the attachment of alanine to tRNA(Ala) in a two-step reaction: alanine is first activated by ATP to form Ala-AMP and then transferred to the acceptor end of tRNA(Ala). Also edits incorrectly charged Ser-tRNA(Ala) and Gly-tRNA(Ala) via its editing domain. This chain is Alanine--tRNA ligase, found in Aliarcobacter butzleri (strain RM4018) (Arcobacter butzleri).